We begin with the raw amino-acid sequence, 60 residues long: UPF0434 protein Daci_3569 (60 aa).

The protein belongs to the UPF0434 family.

In Delftia acidovorans (strain DSM 14801 / SPH-1), this protein is UPF0434 protein Daci_3569.